A 353-amino-acid polypeptide reads, in one-letter code: MTVNLTELDAHEQPSDQMRAIWKSYSRADKEELLLNGAIDDLEKPEKAAEFVVAGTVPAATLTKGFAFLGSGFDAAASDAPIYYHPLLPGLLIFPSIVPLEVQKTLLSKLIHRDLSVPAHQTNMHLHYELPYVERKPTDGEGEPEDCRQSFFSHSPDSPVRFQPKDPDVHKPLSMKQVMDRRLHWVTLGGQYDWTNRVYPEEEPPKFPPDVAGFLETVFPDTIAQAAIVNFYTPGDTMMMHRDVSEETDKGLVSLSLGCDGLFMIAPSDIGKMSEEERPEDVKKQYLLLRLRSGDAIYMIKESRYAWHGVPKVLKGTCPEALEDWPAEDGRFEEWRGWMKNKRINLNVRQMRE.

A Fe2OG dioxygenase domain is found at 223–352 (IAQAAIVNFY…RINLNVRQMR (130 aa)). Residues His-241, Asp-243, and His-308 each coordinate Fe cation. Arg-343 contacts 2-oxoglutarate.

The protein belongs to the alkB family. The cofactor is Fe(2+).

Its subcellular location is the cytoplasm. It is found in the P-body. It catalyses the reaction an N(6)-methyladenosine in mRNA + 2-oxoglutarate + O2 = an adenosine in mRNA + formaldehyde + succinate + CO2. Functionally, RNA demethylase that regulates the stability of mRNAs through an m(6)A-dependent manner. M6A is a modification present at internal sites of mRNAs and some non-coding RNAs and plays a role in mRNA stability and processing. Plays a role in pathogenicity towards plant host. The sequence is that of N6-methyladenosine RNA demethylase ALKB1 from Pyricularia oryzae (strain 70-15 / ATCC MYA-4617 / FGSC 8958) (Rice blast fungus).